A 245-amino-acid chain; its full sequence is Dehydrogenase/reductase SDR family member 6 (245 aa).

Residues 16–18 (QGI), D37, and D58 contribute to the NAD(+) site. R144 lines the substrate pocket. The active-site Proton acceptor is the Y147. NAD(+) is bound by residues K151 and 180-184 (VDTPS). Substrate-binding residues include R188 and R205.

This sequence belongs to the short-chain dehydrogenases/reductases (SDR) family. As to quaternary structure, homotetramer.

The protein resides in the cytoplasm. It carries out the reaction cis-4-hydroxy-L-proline + NAD(+) = 4-oxo-L-proline + NADH + H(+). The catalysed reaction is (R)-3-hydroxybutanoate + NAD(+) = acetoacetate + NADH + H(+). It functions in the pathway amino-acid metabolism. It participates in siderophore biosynthesis. Functionally, NAD(H)-dependent dehydrogenase/reductase with a preference for cyclic substrates. Catalyzes stereoselective conversion of 4-oxo-L-proline to cis-4-hydroxy-L-proline, likely a detoxification mechanism for ketoprolines. Mediates the formation of 2,5-dihydroxybenzoate (2,5-DHBA), a siderophore that chelates free cytoplasmic iron, thereby regulating iron transport and homeostasis while protecting cells against free radical-induced oxidative stress. The iron-siderophore complex is imported into mitochondria, providing an iron source for mitochondrial metabolic processes in particular heme synthesis. May act as a 3-hydroxybutyrate dehydrogenase. The polypeptide is Dehydrogenase/reductase SDR family member 6 (bdh2) (Xenopus laevis (African clawed frog)).